Here is a 225-residue protein sequence, read N- to C-terminus: Immune-associated nucleotide-binding protein 1 (225 aa).

Positions 6 to 214 (CPVTNLLLLG…YTENMHRKIK (209 aa)) constitute an AIG1-type G domain. Residues 15–22 (GRSENGKS) form a G1 region. 15-23 (GRSENGKSS) provides a ligand contact to GTP. The interval 42 to 46 (DMDQR) is G2. The interval 64–67 (DTPG) is G3. Positions 134-137 (TGGD) are G4. A G5 region spans residues 173–175 (NNK). Asn174 serves as a coordination point for GTP.

This sequence belongs to the TRAFAC class TrmE-Era-EngA-EngB-Septin-like GTPase superfamily. AIG1/Toc34/Toc159-like paraseptin GTPase family. IAN subfamily. As to expression, mostly expressed in pollen.

The sequence is that of Immune-associated nucleotide-binding protein 1 from Arabidopsis thaliana (Mouse-ear cress).